Here is a 271-residue protein sequence, read N- to C-terminus: Tryptophan synthase alpha chain (271 aa).

Residues glutamate 49 and aspartate 60 each act as proton acceptor in the active site.

It belongs to the TrpA family. Tetramer of two alpha and two beta chains.

The catalysed reaction is (1S,2R)-1-C-(indol-3-yl)glycerol 3-phosphate + L-serine = D-glyceraldehyde 3-phosphate + L-tryptophan + H2O. It participates in amino-acid biosynthesis; L-tryptophan biosynthesis; L-tryptophan from chorismate: step 5/5. Its function is as follows. The alpha subunit is responsible for the aldol cleavage of indoleglycerol phosphate to indole and glyceraldehyde 3-phosphate. This Aromatoleum aromaticum (strain DSM 19018 / LMG 30748 / EbN1) (Azoarcus sp. (strain EbN1)) protein is Tryptophan synthase alpha chain.